The primary structure comprises 494 residues: Guanosine-5'-triphosphate,3'-diphosphate pyrophosphatase (494 aa).

It belongs to the GppA/Ppx family. GppA subfamily.

The enzyme catalyses guanosine 3'-diphosphate 5'-triphosphate + H2O = guanosine 3',5'-bis(diphosphate) + phosphate + H(+). Its pathway is purine metabolism; ppGpp biosynthesis; ppGpp from GTP: step 2/2. Its function is as follows. Catalyzes the conversion of pppGpp to ppGpp. Guanosine pentaphosphate (pppGpp) is a cytoplasmic signaling molecule which together with ppGpp controls the 'stringent response', an adaptive process that allows bacteria to respond to amino acid starvation, resulting in the coordinated regulation of numerous cellular activities. The protein is Guanosine-5'-triphosphate,3'-diphosphate pyrophosphatase of Escherichia fergusonii (strain ATCC 35469 / DSM 13698 / CCUG 18766 / IAM 14443 / JCM 21226 / LMG 7866 / NBRC 102419 / NCTC 12128 / CDC 0568-73).